The primary structure comprises 275 residues: Anthracycline biosynthesis protein DnrV (275 aa).

2 VOC domains span residues 8–136 (APAW…VWRK) and 150–263 (SVGW…VVEL).

It functions in the pathway antibiotic biosynthesis; daunorubicin biosynthesis. The protein operates within antibiotic biosynthesis; carminomycin biosynthesis. Involved in the biosynthesis of the anthracyclines carminomycin and daunorubicin (daunomycin) which are aromatic polyketide antibiotics that exhibit high cytotoxicity and are widely applied in the chemotherapy of a variety of cancers. In vivo, it acts jointly with DoxA in the conversion of 13-deoxycarminomycin and 13-deoxydaunorubicin to yield carminomycin and daunorubicin, respectively. In vitro, it also acts jointly with DoxA in the C-14 hydroxylation of daunorubicin to form doxorubicin, although this strain is not a doxorubicin producer. The protein is Anthracycline biosynthesis protein DnrV (dnrV) of Streptomyces peucetius.